The primary structure comprises 519 residues: Pleckstrin homology domain-containing family A member 8 (519 aa).

The region spanning 1–93 (MEGVLYKWTN…WLVALGSAKA (93 aa)) is the PH domain. Thr139 is modified (phosphothreonine). Residue Ser145 is modified to Phosphoserine. Phosphothreonine is present on Thr153. The interval 310–519 (TFFSTMNTSF…VHGLESDEVV (210 aa)) is glycolipid transfer protein homology domain.

In terms of assembly, homodimer. Interacts with ARF1; the interaction together with phosphatidylinositol 4-phosphate binding is required for FAPP2 GlcCer transfer ability. Expressed in kidney cell lines.

It is found in the golgi apparatus. It localises to the trans-Golgi network membrane. Its subcellular location is the membrane. Its function is as follows. Cargo transport protein that is required for apical transport from the Golgi complex. Transports AQP2 from the trans-Golgi network (TGN) to sites of AQP2 phosphorylation. Mediates the non-vesicular transport of glucosylceramide (GlcCer) from the trans-Golgi network (TGN) to the plasma membrane and plays a pivotal role in the synthesis of complex glycosphingolipids. Binding of both phosphatidylinositol 4-phosphate (PIP) and ARF1 are essential for the GlcCer transfer ability. Also required for primary cilium formation, possibly by being involved in the transport of raft lipids to the apical membrane, and for membrane tubulation. The protein is Pleckstrin homology domain-containing family A member 8 (PLEKHA8) of Homo sapiens (Human).